The following is a 96-amino-acid chain: Protein Vpr (96 aa).

Positions 1–42 are homooligomerization; that stretch reads MEQAPEDQGPQREPYNEWTLELLEELKSEAVRHFPRIWLHNL. Phosphoserine; by host is present on residues S79, S94, and S96.

This sequence belongs to the HIV-1 VPR protein family. In terms of assembly, homooligomer, may form homodimer. Interacts with p6-gag region of the Pr55 Gag precursor protein through a (Leu-X-X)4 motif near the C-terminus of the P6gag protein. Interacts with host UNG. May interact with host RAD23A/HHR23A. Interacts with host VPRBP/DCAF1, leading to hijack the CUL4A-RBX1-DDB1-DCAF1/VPRBP complex, mediating ubiquitination of host proteins such as TERT and ZGPAT and arrest of the cell cycle in G2 phase. Post-translationally, phosphorylated on several residues by host. These phosphorylations regulate VPR activity for the nuclear import of the HIV-1 pre-integration complex.

Its subcellular location is the virion. The protein resides in the host nucleus. It is found in the host extracellular space. In terms of biological role, during virus replication, may deplete host UNG protein, and incude G2-M cell cycle arrest. Acts by targeting specific host proteins for degradation by the 26S proteasome, through association with the cellular CUL4A-DDB1 E3 ligase complex by direct interaction with host VPRPB/DCAF-1. Cell cycle arrest reportedly occurs within hours of infection and is not blocked by antiviral agents, suggesting that it is initiated by the VPR carried into the virion. Additionally, VPR induces apoptosis in a cell cycle dependent manner suggesting that these two effects are mechanistically linked. Detected in the serum and cerebrospinal fluid of AIDS patient, VPR may also induce cell death to bystander cells. During virus entry, plays a role in the transport of the viral pre-integration (PIC) complex to the host nucleus. This function is crucial for viral infection of non-dividing macrophages. May act directly at the nuclear pore complex, by binding nucleoporins phenylalanine-glycine (FG)-repeat regions. The sequence is that of Protein Vpr from Homo sapiens (Human).